A 373-amino-acid chain; its full sequence is Phosphoserine aminotransferase (373 aa).

Residue arginine 46 coordinates L-glutamate. Pyridoxal 5'-phosphate is bound by residues phenylalanine 104, threonine 150, aspartate 172, and glutamine 195. Lysine 196 bears the N6-(pyridoxal phosphate)lysine mark. Pyridoxal 5'-phosphate is bound at residue 247-248 (NT).

This sequence belongs to the class-V pyridoxal-phosphate-dependent aminotransferase family. SerC subfamily. In terms of assembly, homodimer. Requires pyridoxal 5'-phosphate as cofactor.

The protein resides in the cytoplasm. It catalyses the reaction O-phospho-L-serine + 2-oxoglutarate = 3-phosphooxypyruvate + L-glutamate. It carries out the reaction 4-(phosphooxy)-L-threonine + 2-oxoglutarate = (R)-3-hydroxy-2-oxo-4-phosphooxybutanoate + L-glutamate. It functions in the pathway amino-acid biosynthesis; L-serine biosynthesis; L-serine from 3-phospho-D-glycerate: step 2/3. The protein operates within cofactor biosynthesis; pyridoxine 5'-phosphate biosynthesis; pyridoxine 5'-phosphate from D-erythrose 4-phosphate: step 3/5. Functionally, catalyzes the reversible conversion of 3-phosphohydroxypyruvate to phosphoserine and of 3-hydroxy-2-oxo-4-phosphonooxybutanoate to phosphohydroxythreonine. The chain is Phosphoserine aminotransferase from Rhodococcus opacus (strain B4).